The chain runs to 465 residues: G1/S-specific cyclin CLN2 (465 aa).

This sequence belongs to the cyclin family.

Functionally, essential for the control of the cell cycle at the G1/S (start) transition. Interacts with the CDC28 protein kinase to form MPF. This chain is G1/S-specific cyclin CLN2 (CLN2), found in Candida albicans (Yeast).